Here is a 294-residue protein sequence, read N- to C-terminus: MGEKNEELQILIITGLSGAGKTQAINCLEDIGYYCVDNLPPALMFKFIELSMQSEGIKKVALVIDVRGGDFFPDLSLVLEELEDSQINYQIIFLEASDEVLVRRFKESRRRHPLGSSSRLLEAIQEERRMLQELRGKAHFLIDTSNLSPRELKEKLDLRYSEDETLRFSASIVSFGYKLGLPMDSDLVIDVRFLPNPFYDPLMRTMTGKDPMVIDYVLESSVTKSFTRRFLNLLKYLIPYYIKEGKTNLAIAIGCTGGQHRSVVLADYTGKQLEKMGYNVIVRHRDIAKHKTEE.

Residue 15-22 (GLSGAGKT) participates in ATP binding. A GTP-binding site is contributed by 65 to 68 (DVRG).

It belongs to the RapZ-like family.

In terms of biological role, displays ATPase and GTPase activities. This Syntrophomonas wolfei subsp. wolfei (strain DSM 2245B / Goettingen) protein is Nucleotide-binding protein Swol_0262.